Consider the following 149-residue polypeptide: Large ribosomal subunit protein bL9 (149 aa).

It belongs to the bacterial ribosomal protein bL9 family.

In terms of biological role, binds to the 23S rRNA. This Histophilus somni (strain 129Pt) (Haemophilus somnus) protein is Large ribosomal subunit protein bL9.